The primary structure comprises 481 residues: Ribulose bisphosphate carboxylase large chain (481 aa).

The propeptide occupies 1 to 2 (MS). The residue at position 3 (Pro-3) is an N-acetylproline. Lys-14 is subject to N6,N6,N6-trimethyllysine. Substrate-binding residues include Asn-123 and Thr-173. Lys-175 serves as the catalytic Proton acceptor. Position 177 (Lys-177) interacts with substrate. Mg(2+)-binding residues include Lys-201, Asp-203, and Glu-204. Position 201 is an N6-carboxylysine (Lys-201). The active-site Proton acceptor is the His-294. Residues Arg-295, His-327, and Ser-379 each coordinate substrate.

This sequence belongs to the RuBisCO large chain family. Type I subfamily. As to quaternary structure, heterohexadecamer of 8 large chains and 8 small chains; disulfide-linked. The disulfide link is formed within the large subunit homodimers. The cofactor is Mg(2+). The disulfide bond which can form in the large chain dimeric partners within the hexadecamer appears to be associated with oxidative stress and protein turnover.

The protein localises to the plastid. The protein resides in the chloroplast. It catalyses the reaction 2 (2R)-3-phosphoglycerate + 2 H(+) = D-ribulose 1,5-bisphosphate + CO2 + H2O. The catalysed reaction is D-ribulose 1,5-bisphosphate + O2 = 2-phosphoglycolate + (2R)-3-phosphoglycerate + 2 H(+). Functionally, ruBisCO catalyzes two reactions: the carboxylation of D-ribulose 1,5-bisphosphate, the primary event in carbon dioxide fixation, as well as the oxidative fragmentation of the pentose substrate in the photorespiration process. Both reactions occur simultaneously and in competition at the same active site. This chain is Ribulose bisphosphate carboxylase large chain, found in Coffea arabica (Arabian coffee).